A 447-amino-acid polypeptide reads, in one-letter code: Tubulin beta-2 chain (447 aa).

GTP-binding residues include Gln11, Glu69, Ser138, Gly142, Thr143, Gly144, Asn204, and Asn226. A Mg(2+)-binding site is contributed by Glu69. A compositionally biased stretch (polar residues) spans 419–428; it reads VSEYQQYQDA. The tract at residues 419-447 is disordered; it reads VSEYQQYQDATSDEEGEYEDEDQEPEEDM. Residues 429–447 are compositionally biased toward acidic residues; that stretch reads TSDEEGEYEDEDQEPEEDM.

Belongs to the tubulin family. As to quaternary structure, dimer of alpha and beta chains. A typical microtubule is a hollow water-filled tube with an outer diameter of 25 nm and an inner diameter of 15 nM. Alpha-beta heterodimers associate head-to-tail to form protofilaments running lengthwise along the microtubule wall with the beta-tubulin subunit facing the microtubule plus end conferring a structural polarity. Microtubules usually have 13 protofilaments but different protofilament numbers can be found in some organisms and specialized cells. Mg(2+) is required as a cofactor.

The protein resides in the cytoplasm. The protein localises to the cytoskeleton. Tubulin is the major constituent of microtubules, a cylinder consisting of laterally associated linear protofilaments composed of alpha- and beta-tubulin heterodimers. Microtubules grow by the addition of GTP-tubulin dimers to the microtubule end, where a stabilizing cap forms. Below the cap, tubulin dimers are in GDP-bound state, owing to GTPase activity of alpha-tubulin. The chain is Tubulin beta-2 chain (TUBB2) from Triticum aestivum (Wheat).